A 182-amino-acid chain; its full sequence is MWPPDPDPDPDPEPAGGSRPGPAVPGLRALLPARAFLCSLKGRLLLAESGLSFITFICYVASSASAFLTAPLLEFLLALYFLFADAMQLNDKWQGLCWPMMDFLRCVTAALIYFAISITAIAKYSDGASKAAGVFGFFATIVFATDFYLIFNDVAKFLKQGDSADETTAHKTEEENSDSDSD.

Over residues 1-12 (MWPPDPDPDPDP) the composition is skewed to acidic residues. The disordered stretch occupies residues 1-21 (MWPPDPDPDPDPEPAGGSRPG). An MARVEL domain is found at 36-155 (FLCSLKGRLL…DFYLIFNDVA (120 aa)). The next 3 helical transmembrane spans lie at 64–84 (ASAFLTAPLLEFLLALYFLFA), 101–121 (MDFLRCVTAALIYFAISITAI), and 131–151 (AAGVFGFFATIVFATDFYLIF).

It belongs to the chemokine-like factor family. As to expression, expressed in the leukocytes, placenta and testis.

Its subcellular location is the membrane. This chain is CKLF-like MARVEL transmembrane domain-containing protein 3 (CMTM3), found in Homo sapiens (Human).